Here is a 27-residue protein sequence, read N- to C-terminus: thr operon leader peptide (27 aa).

The protein belongs to the thr operon leader peptide family.

Functionally, this protein is involved in control of the biosynthesis of threonine. In Escherichia coli O157:H7, this protein is thr operon leader peptide.